Here is a 274-residue protein sequence, read N- to C-terminus: Thiazole synthase (274 aa).

Lys-115 (schiff-base intermediate with DXP) is an active-site residue. 1-deoxy-D-xylulose 5-phosphate contacts are provided by residues Gly-176, 202–203 (AG), and 224–225 (NS).

The protein belongs to the ThiG family. Homotetramer. Forms heterodimers with either ThiH or ThiS.

The protein localises to the cytoplasm. The catalysed reaction is [ThiS sulfur-carrier protein]-C-terminal-Gly-aminoethanethioate + 2-iminoacetate + 1-deoxy-D-xylulose 5-phosphate = [ThiS sulfur-carrier protein]-C-terminal Gly-Gly + 2-[(2R,5Z)-2-carboxy-4-methylthiazol-5(2H)-ylidene]ethyl phosphate + 2 H2O + H(+). It functions in the pathway cofactor biosynthesis; thiamine diphosphate biosynthesis. Its function is as follows. Catalyzes the rearrangement of 1-deoxy-D-xylulose 5-phosphate (DXP) to produce the thiazole phosphate moiety of thiamine. Sulfur is provided by the thiocarboxylate moiety of the carrier protein ThiS. In vitro, sulfur can be provided by H(2)S. The chain is Thiazole synthase from Parasynechococcus marenigrum (strain WH8102).